The chain runs to 509 residues: Protein disulfide-isomerase (509 aa).

Residues Met1 to Ala18 form the signal peptide. The region spanning Trp19 to Gly135 is the Thioredoxin 1 domain. Residues Cys54 and Cys57 each act as nucleophile in the active site. Cys54 and Cys57 are oxidised to a cystine. 2 positions are modified to N6-succinyllysine: Lys223 and Lys272. 2 positions are modified to phosphoserine: Ser332 and Ser358. The 130-residue stretch at Phe347–Gln476 folds into the Thioredoxin 2 domain. Residues Cys398 and Cys401 each act as nucleophile in the active site. Cys398 and Cys401 are joined by a disulfide. A Phosphoserine modification is found at Ser428. Residues Leu471–Leu509 form a disordered region. A compositionally biased stretch (acidic residues) spans Ala479–Asp501. The Prevents secretion from ER motif lies at Arg506–Leu509.

The protein belongs to the protein disulfide isomerase family. Heterodimer; heterodimerizes with the protein microsomal triglyceride transfer MTTP. Homodimer. Monomers and homotetramers may also occur. Interacts with P4HA2, forming a heterotetramer consisting of 2 alpha subunits (P4HA2) and 2 beta (P4HB), where P4HB plays the role of a structural subunit; this tetramer catalyzes the formation of 4-hydroxyproline in collagen. Also constitutes the structural subunit of the microsomal triacylglycerol transfer protein MTTP in mammalian cells. Stabilizes both enzymes and retain them in the ER without contributing to the catalytic activity. Binds UBQLN1. Interacts with ERO1B. Interacts with ILDR2. Interacts with ERN1/IRE1A (via N-terminus); the interaction is enhanced by phosphorylation of P4HB by FAM20C in response to endoplasmic reticulum stress and results in attenuation of ERN1 activity. Phosphorylation of Ser-358 by FAM20C is induced by endoplasmic reticulum stress and results in a functional switch from oxidoreductase to molecular chaperone. It also promotes interaction with ERN1.

The protein localises to the endoplasmic reticulum. It localises to the endoplasmic reticulum lumen. The protein resides in the melanosome. It is found in the cell membrane. It carries out the reaction Catalyzes the rearrangement of -S-S- bonds in proteins.. In terms of biological role, this multifunctional protein catalyzes the formation, breakage and rearrangement of disulfide bonds. At the cell surface, seems to act as a reductase that cleaves disulfide bonds of proteins attached to the cell. May therefore cause structural modifications of exofacial proteins. Inside the cell, seems to form/rearrange disulfide bonds of nascent proteins. At high concentrations and following phosphorylation by FAM20C, functions as a chaperone that inhibits aggregation of misfolded proteins. At low concentrations, facilitates aggregation (anti-chaperone activity). May be involved with other chaperones in the structural modification of the TG precursor in hormone biogenesis. Also acts as a structural subunit of various enzymes such as prolyl 4-hydroxylase and microsomal triacylglycerol transfer protein MTTP. Receptor for LGALS9; the interaction retains P4HB at the cell surface of Th2 T helper cells, increasing disulfide reductase activity at the plasma membrane, altering the plasma membrane redox state and enhancing cell migration. This chain is Protein disulfide-isomerase (P4HB), found in Oryctolagus cuniculus (Rabbit).